The following is a 416-amino-acid chain: Sulfoquinovosyl glycerol-binding protein SmoF (416 aa).

A signal peptide spans 1-29 (MTLKTIRGKALMGAALCATMLTFSGQAFA). Residue Gln40 participates in 3-(6-sulfo-alpha-D-quinovosyl)glycerol binding. His41 provides a ligand contact to 6-sulfo-D-quinovose. 3-(6-sulfo-alpha-D-quinovosyl)glycerol contacts are provided by Ser71, Asp95, Asp141, Gly194, Thr248, Gly303, Trp304, and Arg373. Residues Gly303, Trp304, and Arg373 each contribute to the 6-sulfo-D-quinovose site.

Belongs to the bacterial solute-binding protein 1 family. The complex is probably composed of two ATP-binding proteins (SmoE), two transmembrane proteins (SmoG and SmoH) and a solute-binding protein (SmoF).

The protein localises to the periplasm. Functionally, part of the ABC transporter complex SmoEFGH involved in sulfoquinovosyl glycerol (SQGro) uptake. Binds sulfoquinovosyl glycerol (SQGro). Can also bind sulfoquinovose (SQ), methyl alpha-sulfoquinovoside (SQMe) and a short-chain derivative of sulfoquinovosyl diacylglycerol (SQDG). Cannot bind D-glucose and D-glucuronic acid. The polypeptide is Sulfoquinovosyl glycerol-binding protein SmoF (Agrobacterium fabrum (strain C58 / ATCC 33970) (Agrobacterium tumefaciens (strain C58))).